The following is a 248-amino-acid chain: Uridylate kinase (248 aa).

15–18 serves as a coordination point for ATP; the sequence is KLSG. The interval 23 to 28 is involved in allosteric activation by GTP; sequence GAEGFG. Gly-57 is a binding site for UMP. ATP contacts are provided by Gly-58 and Arg-62. Residues Asp-77 and 138–145 contribute to the UMP site; that span reads TGNPFFTT. Residues Thr-165, Tyr-171, and Asp-174 each coordinate ATP.

The protein belongs to the UMP kinase family. As to quaternary structure, homohexamer.

It localises to the cytoplasm. The enzyme catalyses UMP + ATP = UDP + ADP. It functions in the pathway pyrimidine metabolism; CTP biosynthesis via de novo pathway; UDP from UMP (UMPK route): step 1/1. Its activity is regulated as follows. Allosterically activated by GTP. Inhibited by UTP. Catalyzes the reversible phosphorylation of UMP to UDP. In Yersinia enterocolitica serotype O:8 / biotype 1B (strain NCTC 13174 / 8081), this protein is Uridylate kinase.